A 268-amino-acid chain; its full sequence is 4-hydroxy-tetrahydrodipicolinate reductase (268 aa).

Residues 10 to 15 (GAGGRM), Asp-36, 99 to 101 (GTT), and 123 to 126 (APNM) each bind NAD(+). The active-site Proton donor/acceptor is the His-156. His-157 is a (S)-2,3,4,5-tetrahydrodipicolinate binding site. Lys-160 functions as the Proton donor in the catalytic mechanism. 166–167 (GT) is a (S)-2,3,4,5-tetrahydrodipicolinate binding site.

It belongs to the DapB family.

The protein localises to the cytoplasm. It catalyses the reaction (S)-2,3,4,5-tetrahydrodipicolinate + NAD(+) + H2O = (2S,4S)-4-hydroxy-2,3,4,5-tetrahydrodipicolinate + NADH + H(+). It carries out the reaction (S)-2,3,4,5-tetrahydrodipicolinate + NADP(+) + H2O = (2S,4S)-4-hydroxy-2,3,4,5-tetrahydrodipicolinate + NADPH + H(+). Its pathway is amino-acid biosynthesis; L-lysine biosynthesis via DAP pathway; (S)-tetrahydrodipicolinate from L-aspartate: step 4/4. Functionally, catalyzes the conversion of 4-hydroxy-tetrahydrodipicolinate (HTPA) to tetrahydrodipicolinate. The chain is 4-hydroxy-tetrahydrodipicolinate reductase from Dechloromonas aromatica (strain RCB).